A 466-amino-acid polypeptide reads, in one-letter code: Asparagine--tRNA ligase (466 aa).

Belongs to the class-II aminoacyl-tRNA synthetase family. As to quaternary structure, homodimer.

It is found in the cytoplasm. It carries out the reaction tRNA(Asn) + L-asparagine + ATP = L-asparaginyl-tRNA(Asn) + AMP + diphosphate + H(+). The protein is Asparagine--tRNA ligase of Yersinia pseudotuberculosis serotype O:1b (strain IP 31758).